The following is a 232-amino-acid chain: 5'-methylthioadenosine/S-adenosylhomocysteine nucleosidase (232 aa).

The active-site Proton acceptor is E12. Substrate contacts are provided by residues G78, I152, and 173–174; that span reads ME. D197 acts as the Proton donor in catalysis.

This sequence belongs to the PNP/UDP phosphorylase family. MtnN subfamily. In terms of assembly, homodimer.

It carries out the reaction S-adenosyl-L-homocysteine + H2O = S-(5-deoxy-D-ribos-5-yl)-L-homocysteine + adenine. It catalyses the reaction S-methyl-5'-thioadenosine + H2O = 5-(methylsulfanyl)-D-ribose + adenine. The catalysed reaction is 5'-deoxyadenosine + H2O = 5-deoxy-D-ribose + adenine. It participates in amino-acid biosynthesis; L-methionine biosynthesis via salvage pathway; S-methyl-5-thio-alpha-D-ribose 1-phosphate from S-methyl-5'-thioadenosine (hydrolase route): step 1/2. Functionally, catalyzes the irreversible cleavage of the glycosidic bond in both 5'-methylthioadenosine (MTA) and S-adenosylhomocysteine (SAH/AdoHcy) to adenine and the corresponding thioribose, 5'-methylthioribose and S-ribosylhomocysteine, respectively. Also cleaves 5'-deoxyadenosine, a toxic by-product of radical S-adenosylmethionine (SAM) enzymes, into 5-deoxyribose and adenine. Thus, is required for in vivo function of the radical SAM enzymes biotin synthase and lipoic acid synthase, that are inhibited by 5'-deoxyadenosine accumulation. This is 5'-methylthioadenosine/S-adenosylhomocysteine nucleosidase from Escherichia fergusonii (strain ATCC 35469 / DSM 13698 / CCUG 18766 / IAM 14443 / JCM 21226 / LMG 7866 / NBRC 102419 / NCTC 12128 / CDC 0568-73).